The primary structure comprises 278 residues: Small ribosomal subunit protein uS2 (278 aa).

Residues 233–258 (IDMEAAGEAPANKGKKKSAKARLDKS) form a disordered region.

This sequence belongs to the universal ribosomal protein uS2 family.

In Bacteroides fragilis (strain ATCC 25285 / DSM 2151 / CCUG 4856 / JCM 11019 / LMG 10263 / NCTC 9343 / Onslow / VPI 2553 / EN-2), this protein is Small ribosomal subunit protein uS2.